The sequence spans 238 residues: Aspartate/glutamate leucyltransferase (238 aa).

The protein belongs to the R-transferase family. Bpt subfamily.

Its subcellular location is the cytoplasm. It carries out the reaction N-terminal L-glutamyl-[protein] + L-leucyl-tRNA(Leu) = N-terminal L-leucyl-L-glutamyl-[protein] + tRNA(Leu) + H(+). It catalyses the reaction N-terminal L-aspartyl-[protein] + L-leucyl-tRNA(Leu) = N-terminal L-leucyl-L-aspartyl-[protein] + tRNA(Leu) + H(+). In terms of biological role, functions in the N-end rule pathway of protein degradation where it conjugates Leu from its aminoacyl-tRNA to the N-termini of proteins containing an N-terminal aspartate or glutamate. The protein is Aspartate/glutamate leucyltransferase of Shewanella sp. (strain MR-4).